A 384-amino-acid chain; its full sequence is Succinyl-diaminopimelate desuccinylase (384 aa).

Position 71 (His-71) interacts with Zn(2+). Asp-73 is a catalytic residue. Asp-104 contributes to the Zn(2+) binding site. Glu-139 acts as the Proton acceptor in catalysis. Zn(2+)-binding residues include Glu-140, Glu-168, and His-357.

This sequence belongs to the peptidase M20A family. DapE subfamily. In terms of assembly, homodimer. Zn(2+) serves as cofactor. The cofactor is Co(2+).

It catalyses the reaction N-succinyl-(2S,6S)-2,6-diaminopimelate + H2O = (2S,6S)-2,6-diaminopimelate + succinate. The protein operates within amino-acid biosynthesis; L-lysine biosynthesis via DAP pathway; LL-2,6-diaminopimelate from (S)-tetrahydrodipicolinate (succinylase route): step 3/3. Catalyzes the hydrolysis of N-succinyl-L,L-diaminopimelic acid (SDAP), forming succinate and LL-2,6-diaminopimelate (DAP), an intermediate involved in the bacterial biosynthesis of lysine and meso-diaminopimelic acid, an essential component of bacterial cell walls. The protein is Succinyl-diaminopimelate desuccinylase of Afipia carboxidovorans (strain ATCC 49405 / DSM 1227 / KCTC 32145 / OM5) (Oligotropha carboxidovorans).